Reading from the N-terminus, the 151-residue chain is Large ribosomal subunit protein bL9 (151 aa).

The protein belongs to the bacterial ribosomal protein bL9 family.

Its function is as follows. Binds to the 23S rRNA. The protein is Large ribosomal subunit protein bL9 of Francisella tularensis subsp. tularensis (strain FSC 198).